The primary structure comprises 271 residues: Digeranylgeranylglyceryl phosphate synthase (271 aa).

Transmembrane regions (helical) follow at residues Ile-11–Leu-31, Val-33–Asn-53, Phe-88–Leu-108, Leu-125–Val-145, Pro-149–Leu-169, Val-201–Trp-221, Leu-224–Gly-244, and Ala-251–Leu-271.

This sequence belongs to the UbiA prenyltransferase family. DGGGP synthase subfamily. Requires Mg(2+) as cofactor.

The protein resides in the cell membrane. It carries out the reaction sn-3-O-(geranylgeranyl)glycerol 1-phosphate + (2E,6E,10E)-geranylgeranyl diphosphate = 2,3-bis-O-(geranylgeranyl)-sn-glycerol 1-phosphate + diphosphate. It functions in the pathway membrane lipid metabolism; glycerophospholipid metabolism. Prenyltransferase that catalyzes the transfer of the geranylgeranyl moiety of geranylgeranyl diphosphate (GGPP) to the C2 hydroxyl of (S)-3-O-geranylgeranylglyceryl phosphate (GGGP). This reaction is the second ether-bond-formation step in the biosynthesis of archaeal membrane lipids. The sequence is that of Digeranylgeranylglyceryl phosphate synthase from Methanopyrus kandleri (strain AV19 / DSM 6324 / JCM 9639 / NBRC 100938).